A 184-amino-acid polypeptide reads, in one-letter code: NADH-quinone oxidoreductase subunit J (184 aa).

Residues 1-21 (MEFAFYICGLIAILATLRVIT) form a helical membrane-spanning segment. Topologically, residues 22–27 (HTNPVH) are cytoplasmic. Residues 28-48 (ALLYLIISLLAISGVFFSLGA) form a helical membrane-spanning segment. At 49 to 53 (YFAGA) the chain is on the periplasmic side. Residues 54–74 (LEIIVYAGAIMVLFVFVVMML) form a helical membrane-spanning segment. The Cytoplasmic segment spans residues 75–91 (NLGGSEIEQERQWLKPQ). A helical transmembrane segment spans residues 92–112 (VWIGPAILSAIMLVVIVYAIL). Residues 113-137 (GVNDQGIDGTPISAKAVGITLFGPY) lie on the Periplasmic side of the membrane. Residues 138-158 (VLAVELASMLLLAGLVVAFHV) form a helical membrane-spanning segment. The Cytoplasmic segment spans residues 159–184 (GREERAGEVLSNRKDDSAKRKTEEHA).

This sequence belongs to the complex I subunit 6 family. As to quaternary structure, composed of 13 different subunits. Subunits NuoA, H, J, K, L, M, N constitute the membrane sector of the complex.

Its subcellular location is the cell inner membrane. The catalysed reaction is a quinone + NADH + 5 H(+)(in) = a quinol + NAD(+) + 4 H(+)(out). Functionally, NDH-1 shuttles electrons from NADH, via FMN and iron-sulfur (Fe-S) centers, to quinones in the respiratory chain. The immediate electron acceptor for the enzyme in this species is believed to be ubiquinone. Couples the redox reaction to proton translocation (for every two electrons transferred, four hydrogen ions are translocated across the cytoplasmic membrane), and thus conserves the redox energy in a proton gradient. This Escherichia coli O157:H7 protein is NADH-quinone oxidoreductase subunit J (nuoJ).